The chain runs to 158 residues: SsrA-binding protein (158 aa).

The disordered stretch occupies residues 131 to 158; that stretch reads YDKRQTLRERQDKREADRAMSSHRRLGE.

This sequence belongs to the SmpB family.

The protein localises to the cytoplasm. Functionally, required for rescue of stalled ribosomes mediated by trans-translation. Binds to transfer-messenger RNA (tmRNA), required for stable association of tmRNA with ribosomes. tmRNA and SmpB together mimic tRNA shape, replacing the anticodon stem-loop with SmpB. tmRNA is encoded by the ssrA gene; the 2 termini fold to resemble tRNA(Ala) and it encodes a 'tag peptide', a short internal open reading frame. During trans-translation Ala-aminoacylated tmRNA acts like a tRNA, entering the A-site of stalled ribosomes, displacing the stalled mRNA. The ribosome then switches to translate the ORF on the tmRNA; the nascent peptide is terminated with the 'tag peptide' encoded by the tmRNA and targeted for degradation. The ribosome is freed to recommence translation, which seems to be the essential function of trans-translation. The chain is SsrA-binding protein from Clavibacter michiganensis subsp. michiganensis (strain NCPPB 382).